Here is a 431-residue protein sequence, read N- to C-terminus: uncharacterized protein (431 aa).

A Peptidase S8 domain is found at 1 to 258; that stretch reads MPSQMREAIT…HGLIDLERAG (258 aa).

The protein belongs to the peptidase S8 family.

This is an uncharacterized protein from Sinorhizobium fredii (strain NBRC 101917 / NGR234).